Reading from the N-terminus, the 138-residue chain is Ostreolysin A6 (138 aa).

The protein belongs to the aegerolysin family. In terms of assembly, monomer.

In terms of biological role, has hemolytic activity against bovine erythrocytes at nanomolar concentrations in vitro. Promotes active pleurotolysin B (PlyB)-dependent permeabilization of membranes rich in cholesterol and sphingomyelin. May play an important role in the initial phase of fungal fruiting. The protein is Ostreolysin A6 (OlyA6) of Pleurotus ostreatus (Oyster mushroom).